A 271-amino-acid chain; its full sequence is Protein CDV3 homolog (271 aa).

The segment covering 37–47 (KREVVKPKKPE) has biased composition (basic and acidic residues). Disordered stretches follow at residues 37 to 151 (KREV…GHGP) and 186 to 271 (SQQA…DEAS). The span at 48–61 (VAAGGVAVVGENEN) shows a compositional bias: low complexity. Residues 73–82 (VEEEWKEFEE) show a composition bias toward acidic residues. Polar residues predominate over residues 95–114 (QLSTISSARSRTAQESSESQ). Residue S134 is modified to Phosphoserine. Residues 224–242 (RPEEQRKKKNEPAFEEVRH) show a composition bias toward basic and acidic residues.

The protein belongs to the CDV3 family.

The polypeptide is Protein CDV3 homolog (Drosophila melanogaster (Fruit fly)).